A 421-amino-acid polypeptide reads, in one-letter code: Ethanolamine-phosphate cytidylyltransferase (421 aa).

Residues Ile8–Leu28 traverse the membrane as a helical segment. The tract at residues Ser203 to Ala227 is disordered. Residues Arg204–His215 show a composition bias toward polar residues. CTP is bound by residues Ala262 to Phe263, His270 to Ile273, Arg298, His346 to Val349, and Ser377 to Ile381. The segment at Ala402–Asp421 is disordered. Basic and acidic residues predominate over residues Lys403–Glu413. Ser416 carries the phosphoserine modification.

This sequence belongs to the cytidylyltransferase family. As to expression, expressed in root tip, lateral root primordia, leaves, shoot apex, stem vascular bundles, pollen and embryos.

Its subcellular location is the mitochondrion outer membrane. It carries out the reaction phosphoethanolamine + CTP + H(+) = CDP-ethanolamine + diphosphate. Its pathway is phospholipid metabolism; phosphatidylethanolamine biosynthesis; phosphatidylethanolamine from ethanolamine: step 2/3. Functionally, plays an important role in the biosynthesis of the phospholipid phosphatidylethanolamine. Catalyzes the formation of CDP-ethanolamine. Essential for early embryonic development. This Arabidopsis thaliana (Mouse-ear cress) protein is Ethanolamine-phosphate cytidylyltransferase.